A 474-amino-acid polypeptide reads, in one-letter code: Probable glycine dehydrogenase (decarboxylating) subunit 2 (474 aa).

N6-(pyridoxal phosphate)lysine is present on Lys262.

The protein belongs to the GcvP family. C-terminal subunit subfamily. The glycine cleavage system is composed of four proteins: P, T, L and H. In this organism, the P 'protein' is a heterodimer of two subunits. Pyridoxal 5'-phosphate is required as a cofactor.

The enzyme catalyses N(6)-[(R)-lipoyl]-L-lysyl-[glycine-cleavage complex H protein] + glycine + H(+) = N(6)-[(R)-S(8)-aminomethyldihydrolipoyl]-L-lysyl-[glycine-cleavage complex H protein] + CO2. In terms of biological role, the glycine cleavage system catalyzes the degradation of glycine. The P protein binds the alpha-amino group of glycine through its pyridoxal phosphate cofactor; CO(2) is released and the remaining methylamine moiety is then transferred to the lipoamide cofactor of the H protein. In Thermotoga petrophila (strain ATCC BAA-488 / DSM 13995 / JCM 10881 / RKU-1), this protein is Probable glycine dehydrogenase (decarboxylating) subunit 2.